The sequence spans 605 residues: Adenine deaminase (605 aa).

This sequence belongs to the metallo-dependent hydrolases superfamily. Adenine deaminase family. Mn(2+) is required as a cofactor.

The enzyme catalyses adenine + H2O + H(+) = hypoxanthine + NH4(+). This chain is Adenine deaminase, found in Mesorhizobium japonicum (strain LMG 29417 / CECT 9101 / MAFF 303099) (Mesorhizobium loti (strain MAFF 303099)).